Consider the following 295-residue polypeptide: MLISLPKVRGIYRYDILMSKATWLNVGGRADILFKPRDIEDLTCLIKNTELPVSVIGATSNIIVRDSGIRGITVKLGKEFAYIKSKGNNSIVAGGAVLLSNLAHFAGNQQISGLEFLVGIPGTVGGGIEMNAGAYGSDIASVVQSIKAVNLEDGNLYEFSSEEMGYFYRGHSLKGNWIFVEAEFKGVNSEYELILQRLKEVIERKNKSQPIRGKTAGCIFKNPKNYRAWELIDKSGCLGLNIGGARISKKHCNFLLNYDNATASDLENLGNKVKDAVKDKFNVELEWEIRVLGSY.

In terms of domain architecture, FAD-binding PCMH-type spans 26–189 (VGGRADILFK…VEAEFKGVNS (164 aa)). R169 is a catalytic residue. Catalysis depends on C218, which acts as the Proton donor. The active site involves E288.

It belongs to the MurB family. FAD serves as cofactor.

Its subcellular location is the cytoplasm. It carries out the reaction UDP-N-acetyl-alpha-D-muramate + NADP(+) = UDP-N-acetyl-3-O-(1-carboxyvinyl)-alpha-D-glucosamine + NADPH + H(+). Its pathway is cell wall biogenesis; peptidoglycan biosynthesis. Functionally, cell wall formation. The chain is UDP-N-acetylenolpyruvoylglucosamine reductase from Wolbachia sp. subsp. Drosophila simulans (strain wRi).